Reading from the N-terminus, the 407-residue chain is Peptidase T (407 aa).

A Zn(2+)-binding site is contributed by H82. D84 is an active-site residue. D143 is a Zn(2+) binding site. E177 functions as the Proton acceptor in the catalytic mechanism. 3 residues coordinate Zn(2+): E178, D200, and H382.

It belongs to the peptidase M20B family. Requires Zn(2+) as cofactor.

Its subcellular location is the cytoplasm. It catalyses the reaction Release of the N-terminal residue from a tripeptide.. Cleaves the N-terminal amino acid of tripeptides. The polypeptide is Peptidase T (Streptococcus equi subsp. equi (strain 4047)).